The sequence spans 584 residues: Arginine--tRNA ligase (584 aa).

Residues 125–135 carry the 'HIGH' region motif; it reads PNIAKEMHVGH.

This sequence belongs to the class-I aminoacyl-tRNA synthetase family. As to quaternary structure, monomer.

It localises to the cytoplasm. It carries out the reaction tRNA(Arg) + L-arginine + ATP = L-arginyl-tRNA(Arg) + AMP + diphosphate. The polypeptide is Arginine--tRNA ligase (Thermosynechococcus vestitus (strain NIES-2133 / IAM M-273 / BP-1)).